Reading from the N-terminus, the 481-residue chain is Aspartyl/glutamyl-tRNA(Asn/Gln) amidotransferase subunit B (481 aa).

Belongs to the GatB/GatE family. GatB subfamily. Heterotrimer of A, B and C subunits.

It carries out the reaction L-glutamyl-tRNA(Gln) + L-glutamine + ATP + H2O = L-glutaminyl-tRNA(Gln) + L-glutamate + ADP + phosphate + H(+). The catalysed reaction is L-aspartyl-tRNA(Asn) + L-glutamine + ATP + H2O = L-asparaginyl-tRNA(Asn) + L-glutamate + ADP + phosphate + 2 H(+). Functionally, allows the formation of correctly charged Asn-tRNA(Asn) or Gln-tRNA(Gln) through the transamidation of misacylated Asp-tRNA(Asn) or Glu-tRNA(Gln) in organisms which lack either or both of asparaginyl-tRNA or glutaminyl-tRNA synthetases. The reaction takes place in the presence of glutamine and ATP through an activated phospho-Asp-tRNA(Asn) or phospho-Glu-tRNA(Gln). The chain is Aspartyl/glutamyl-tRNA(Asn/Gln) amidotransferase subunit B from Pseudomonas aeruginosa (strain LESB58).